We begin with the raw amino-acid sequence, 122 residues long: MIKGIGIDIIEIERIARALEKNPRFKERLFTLEENRGFIEKGGHPASIAGVFAAKEAVVKALGTGISNMKWKDIEVLKDSAGKPYIKLHNNALEIAYSKNINEIFISISHSKENAVAQAIAT.

Mg(2+) is bound by residues D8 and E56.

This sequence belongs to the P-Pant transferase superfamily. AcpS family. The cofactor is Mg(2+).

It localises to the cytoplasm. It carries out the reaction apo-[ACP] + CoA = holo-[ACP] + adenosine 3',5'-bisphosphate + H(+). In terms of biological role, transfers the 4'-phosphopantetheine moiety from coenzyme A to a Ser of acyl-carrier-protein. The protein is Holo-[acyl-carrier-protein] synthase of Alkaliphilus metalliredigens (strain QYMF).